The primary structure comprises 363 residues: Anhydro-N-acetylmuramic acid kinase (363 aa).

Position 10–17 (10–17) interacts with ATP; it reads GTSLDGMD.

Belongs to the anhydro-N-acetylmuramic acid kinase family.

The enzyme catalyses 1,6-anhydro-N-acetyl-beta-muramate + ATP + H2O = N-acetyl-D-muramate 6-phosphate + ADP + H(+). It functions in the pathway amino-sugar metabolism; 1,6-anhydro-N-acetylmuramate degradation. It participates in cell wall biogenesis; peptidoglycan recycling. Its function is as follows. Catalyzes the specific phosphorylation of 1,6-anhydro-N-acetylmuramic acid (anhMurNAc) with the simultaneous cleavage of the 1,6-anhydro ring, generating MurNAc-6-P. Is required for the utilization of anhMurNAc either imported from the medium or derived from its own cell wall murein, and thus plays a role in cell wall recycling. Contributes to intrinsic fosfomycin resistance in P.aeruginosa. The polypeptide is Anhydro-N-acetylmuramic acid kinase (Pseudomonas aeruginosa (strain ATCC 15692 / DSM 22644 / CIP 104116 / JCM 14847 / LMG 12228 / 1C / PRS 101 / PAO1)).